Consider the following 422-residue polypeptide: Cell division protein DivIB (422 aa).

2 stretches are compositionally biased toward basic and acidic residues: residues 1-23 (MVDW…KQEE) and 62-75 (EEAK…DQEQ). Residues 1 to 77 (MVDWDKEAQR…DFAKDQEQKH (77 aa)) form a disordered region. Residues 1-109 (MVDWDKEAQR…LQLKSVSWSR (109 aa)) lie on the Cytoplasmic side of the membrane. The chain crosses the membrane as a helical span at residues 110–130 (LILAAAFLFMIIFSAFWLSPL). In terms of domain architecture, POTRA spans 131–202 (NRIATIEVSG…RTVEVNVQEF (72 aa)). Residues 131–422 (NRIATIEVSG…TVTQTRSSNS (292 aa)) lie on the Extracellular side of the membrane. A disordered region spans residues 329–422 (NPLNDPFASP…TVTQTRSSNS (94 aa)). Residues 338–379 (PEEKASYQEKVDQAKEKSKEKQAKADKHSSESKLGDKPKPRG) are compositionally biased toward basic and acidic residues. Low complexity predominate over residues 389 to 422 (TSSQRQTSSQSSPRPGTNSSQQSSTVTQTRSSNS).

The protein belongs to the FtsQ/DivIB family. DivIB subfamily.

Its subcellular location is the cell membrane. Cell division protein that may be involved in stabilizing or promoting the assembly of the division complex. In Aerococcus urinae (strain CCUG 59500 / ACS-120-V-Col10a), this protein is Cell division protein DivIB.